Here is a 246-residue protein sequence, read N- to C-terminus: 14-3-3 protein beta/alpha (246 aa).

Met1 is modified (N-acetylmethionine). N-acetylthreonine; in 14-3-3 protein beta/alpha, N-terminally processed is present on Thr2. Phosphothreonine is present on Thr2. Lys5 is modified (N6-acetyllysine). Lys51 is subject to N6-acetyllysine; alternate. Lys51 participates in a covalent cross-link: Glycyl lysine isopeptide (Lys-Gly) (interchain with G-Cter in SUMO2); alternate. Ser60 bears the Phosphoserine mark. Lys70 is subject to N6-acetyllysine. 3'-nitrotyrosine occurs at positions 84 and 106. Lys117 bears the N6-acetyllysine mark. Phosphoserine occurs at positions 186 and 232.

It belongs to the 14-3-3 family. As to quaternary structure, homodimer. Interacts with SAMSN1 and PRKCE. Interacts with AKAP13. Interacts with SSH1 and TORC2/CRTC2. Interacts with ABL1; the interaction results in cytoplasmic location of ABL1 and inhibition of cABL-mediated apoptosis. Interacts with ROR2 (dimer); the interaction results in phosphorylation of YWHAB on tyrosine residues. Interacts with GAB2. Interacts with YAP1 (phosphorylated form). Interacts with the phosphorylated (by AKT1) form of SRPK2. Interacts with PKA-phosphorylated AANAT. Interacts with MYO1C. Interacts with SIRT2. Interacts with the 'Thr-369' phosphorylated form of DAPK2. Interacts with PI4KB, TBC1D22A and TBC1D22B. Interacts with the 'Ser-1134' and 'Ser-1161' phosphorylated form of SOS1. Interacts (via phosphorylated form) with YWHAB; this interaction occurs in a protein kinase AKT1-dependent manner. Interacts with SLITRK1. Interacts with SYNPO2 (phosphorylated form); YWHAB competes with ACTN2 for interaction with SYNPO2. Interacts with RIPOR2 (via phosphorylated form); this interaction occurs in a chemokine-dependent manner and does not compete for binding of RIPOR2 with RHOA nor blocks inhibition of RIPOR2-mediated RHOA activity. Interacts with MARK2 and MARK3. Interacts with TESK1; the interaction is dependent on the phosphorylation of TESK1 'Ser-439' and inhibits TESK1 kinase activity. Interacts with MEFV. Interacts with HDAC4. Interacts with ADAM22 (via C-terminus). In terms of processing, isoform alpha differs from isoform beta in being phosphorylated. Phosphorylated on Ser-60 by protein kinase C delta type catalytic subunit in a sphingosine-dependent fashion. Post-translationally, isoform Short contains a N-acetylmethionine at position 1.

It localises to the cytoplasm. Its subcellular location is the melanosome. Its function is as follows. Adapter protein implicated in the regulation of a large spectrum of both general and specialized signaling pathways. Binds to a large number of partners, usually by recognition of a phosphoserine or phosphothreonine motif. Binding generally results in the modulation of the activity of the binding partner. Negative regulator of osteogenesis. Blocks the nuclear translocation of the phosphorylated form (by AKT1) of SRPK2 and antagonizes its stimulatory effect on cyclin D1 expression resulting in blockage of neuronal apoptosis elicited by SRPK2. Negative regulator of signaling cascades that mediate activation of MAP kinases via AKAP13. This chain is 14-3-3 protein beta/alpha (Ywhab), found in Mus musculus (Mouse).